Here is a 402-residue protein sequence, read N- to C-terminus: Tyrosine--tRNA ligase (402 aa).

The 'HIGH' region motif lies at 48–57 (PSRPDLHLGH). The short motif at 232–236 (KMSKS) is the 'KMSKS' region element. Residue K235 participates in ATP binding. An S4 RNA-binding domain is found at 339–402 (MPIIDLLTLL…KRKFFKIRSK (64 aa)).

Belongs to the class-I aminoacyl-tRNA synthetase family. TyrS type 2 subfamily. Homodimer.

The protein localises to the cytoplasm. The enzyme catalyses tRNA(Tyr) + L-tyrosine + ATP = L-tyrosyl-tRNA(Tyr) + AMP + diphosphate + H(+). Its function is as follows. Catalyzes the attachment of tyrosine to tRNA(Tyr) in a two-step reaction: tyrosine is first activated by ATP to form Tyr-AMP and then transferred to the acceptor end of tRNA(Tyr). The protein is Tyrosine--tRNA ligase of Chlorobium chlorochromatii (strain CaD3).